The primary structure comprises 321 residues: MSMPMDVSKKSFKPAKTQKSKTISNDYIKGLQTKHFLLYNVIPTIGTITAIALLWWYPISSVEIGLLIGMWALSMIGMSVGLHRYFAHRAFKTSQTMSVILAILGCMGAQGPVVSWVAVHRRHHEYSDLPGDPHSPNPELLGEGIFGTLRGLWHAHVGWLTNHEYPNPMYYAPELMRDKTISKINRNYVVWIVLGLLIPTILGGIIHGSWIGAVEGLLWGGFVRMFVVDNSILSINSFSHAFGTHPFDSKDQSRNNIWVAIPTFGESWQNNHHTFENSAAIGLKWWQIDLGYCLIWGLEKLGLVWDVKLPTAKMIEAKKLA.

Helical transmembrane passes span 36–56 (FLLY…LLWW) and 62–82 (VEIG…SVGL). The Histidine box-1 signature appears at 83–88 (HRYFAH). A helical membrane pass occupies residues 99 to 119 (VILAILGCMGAQGPVVSWVAV). A Histidine box-2 motif is present at residues 120–124 (HRRHH). The helical transmembrane segment at 188 to 208 (YVVWIVLGLLIPTILGGIIHG) threads the bilayer. Positions 269-273 (QNNHH) match the Histidine box-3 motif.

Belongs to the fatty acid desaturase type 2 family. Fe(2+) serves as cofactor.

It localises to the membrane. The enzyme catalyses 5-hexenoyl-[ACP] + 2 reduced [2Fe-2S]-[ferredoxin] + O2 + 2 H(+) = 5-hexynoyl-[ACP] + 2 oxidized [2Fe-2S]-[ferredoxin] + 2 H2O. The catalysed reaction is hexanoyl-[ACP] + 2 reduced [2Fe-2S]-[ferredoxin] + O2 + 2 H(+) = 5-hexenoyl-[ACP] + 2 oxidized [2Fe-2S]-[ferredoxin] + 2 H2O. Its function is as follows. Desaturase involved in the biosynthesis of jamaicamides, which show sodium channel blocking activity and fish toxicity. Catalyzes the conversion of 5-hexenoyl loaded onto the acyl carrier protein JamC (5-hexenoyl-JamC) to 5-hexynoyl-JamC. Can also catalyze the conversion of hexanoyl-JamC to 5-hexenoyl-JamC, but it cannot use free 5-hexenoic acid, 5-hexenoyl-CoA, 2-hexenoyl-JamC, 3-hexenoyl-JamC or 4-hexenoyl-JamC. Is specific for C(6) chains, and cannot use 4-pentenoyl-JamC, 6-heptenoyl-JamC or 7-octenoyl-JamC as substrate. The chain is Hex-5-enoyl-[acyl-carrier protein] acetylenase from Moorena producens (strain JHB).